Consider the following 1791-residue polypeptide: Protein TIC 214 (1791 aa).

Transmembrane regions (helical) follow at residues 19-39 (IINS…FSIG), 68-88 (FIAG…HLAL), 91-111 (PHTI…WNNH), 133-153 (VFLN…SSML), 176-196 (VGWL…LVWI), and 230-250 (IFSI…PSPI). A compositionally biased stretch (basic and acidic residues) spans 257–271 (GTSETEERGGTKQDQ). Disordered regions lie at residues 257–278 (GTSE…TEEA) and 1498–1521 (ADQG…PNQE).

It belongs to the TIC214 family. Part of the Tic complex.

It is found in the plastid. It localises to the chloroplast inner membrane. Involved in protein precursor import into chloroplasts. May be part of an intermediate translocation complex acting as a protein-conducting channel at the inner envelope. The sequence is that of Protein TIC 214 from Aethionema grandiflorum (Persian stone-cress).